A 499-amino-acid polypeptide reads, in one-letter code: AP-1-like transcription factor CAP1 (499 aa).

Residues 1–64 (MTDIKRNFSD…RAYRERKERK (64 aa)) are disordered. 2 consecutive short sequence motifs (bipartite nuclear localization signal) follow at residues 20-27 (TKKLHVDS) and 44-51 (SKRTAQNR). One can recognise a bZIP domain in the interval 40–103 (TEPKSKRTAQ…DVLKNELAKY (64 aa)). Positions 43-66 (KSKRTAQNRAAQRAYRERKERKMK) are basic motif. Positions 49–105 (QNRAAQRAYRERKERKMKELEDKVRLLEDANVRALTETDFLRAQVDVLKNELAKYTG) form a coiled coil. Positions 68–75 (LEDKVRLL) are leucine-zipper. Positions 104–215 (TGGSDFSDLN…SSTPLNDNLL (112 aa)) are disordered. Residues 123-148 (HPNNHHSNVSTGTPHGSMSSSNSVAS) show a composition bias toward polar residues. Composition is skewed to low complexity over residues 155 to 164 (SSASSVSNNS) and 186 to 215 (QQQQ…DNLL). The interval 254–261 (CVKLNEAC) is n-CRD. 2 disulfide bridges follow: cysteine 254–cysteine 446 and cysteine 261–cysteine 477. Residues 408 to 442 (PEKQEKGKYEPPSTSKTTNNNEEEDKDEVVPAPPQ) are disordered. Low complexity predominate over residues 417–427 (EPPSTSKTTNN). The tract at residues 446–477 (CSEIWDRITSHPKYTELDIDGLCNELKSKAKC) is c-CRD. The Nuclear export signal signature appears at 462–469 (LDIDGLCN).

It belongs to the bZIP family. YAP subfamily. In terms of assembly, interacts with YBP1. Post-translationally, upon oxidative stress, is oxidated by the peroxidase GPX3 and stabilized by YBP1. Oxidative stress induces conformational changes through oxidation of cysteine residues, masking the nuclear export signal, thus abolishing nuclear export by CRM1/exportin 1. Phosphorylated in response to H(2)O(2).

The protein resides in the nucleus. It is found in the cytoplasm. Its function is as follows. Transcription activator involved in multidrug resistance, oxidative stress response, and redox homeostasis. Preferentially binds to promoters with the core binding site 5'-TTA[CG]TAA-3'. Involved in the oxidative stress response in via multiple pathways, including the cellular antioxidant defense system, carbohydrate metabolism and energy metabolism, protein degradation, ATP-dependent RNA helicase, and resistance pathways. The ability of the major systemic fungal pathogen of humans to sense and respond to reactive oxygen species, such as H(2)O(2) generated by the host immune system, is required for survival in the host and therefore virulence. Regulates the transcription of COR33, GLR1, GTO1, GTT1, GTT1, TRR1, TRX1, SOD1, CAT1, and the transcription regulator TSA1. Participates in the apoptosis by regulating the expression of the glutathione reductase gene and glutathione content. Also plays a role in the peroxide-mediated induction of MDR1 and other drug response genes such as PDR16, MDR1, FLU1, YCF1, and FCR1. Regulates trehalose accumulation which is important for the oxidative stress tolerance. Recruits ADA2 to its target promoters. Activity of CAP1 is controlled through oxidation of specific cysteine residues resulting in the alteration of its subcellular location. Oxidative stress induces nuclear accumulation and as a result CAP1 transcriptional activity. Nuclear export is restored when disulfide bonds are reduced by thioredoxin, whose expression is controlled by CAP1, providing a mechanism for negative autoregulation. This Candida albicans (strain SC5314 / ATCC MYA-2876) (Yeast) protein is AP-1-like transcription factor CAP1.